The primary structure comprises 171 residues: Terminase, small subunit (171 aa).

Belongs to the P23virus small terminase family. In terms of assembly, homononamer; forms a ring-like structure through which genomic DNA is translocated into the capsid. Heterodimer with the terminase large subunit; the active complex is probably heterooligomeric.

Functionally, the terminase small subunit binds to the packaging initiation site and regulates the ATPase activity of the terminase large subunit. The terminase lies at a unique vertex of the procapsid and is composed of two subunits, a small terminase subunit involved in viral DNA recognition (packaging sequence), and a large terminase subunit. Both terminase subunits heterooligomerize and are docked on the portal protein to form the packaging machine. This chain is Terminase, small subunit, found in Thermus virus P23-45 (Thermus thermophilus phage P23-45).